We begin with the raw amino-acid sequence, 498 residues long: Calcitonin receptor (498 aa).

The signal sequence occupies residues Met1–Gly29. Over Ala30 to Tyr147 the chain is Extracellular. Disulfide bonds link Cys56–Cys82, Cys73–Cys113, and Cys96–Cys135. N-linked (GlcNAc...) asparagine glycans are attached at residues Asn74, Asn126, and Asn131. The chain crosses the membrane as a helical span at residues Ile148–Ile170. Residues Phe171–Val198 are Cytoplasmic-facing. The chain crosses the membrane as a helical span at residues Thr199–Leu219. Residues Val220–Cys236 are Extracellular-facing. Residues Cys236 and Cys306 are joined by a disulfide bond. A helical transmembrane segment spans residues Lys237–Val259. The Cytoplasmic segment spans residues Tyr260–Leu276. Residues Trp277 to Thr297 form a helical membrane-spanning segment. At Arg298 to Asn313 the chain is on the extracellular side. A helical transmembrane segment spans residues Leu314–Leu337. Over Arg338–Lys357 the chain is Cytoplasmic. A helical membrane pass occupies residues Ala358–Leu376. The Extracellular portion of the chain corresponds to Pro377–Leu384. A helical transmembrane segment spans residues Leu385–Cys411. Residues Asn412 to Ala498 lie on the Cytoplasmic side of the membrane.

It belongs to the G-protein coupled receptor 2 family. In terms of assembly, heterodimer of CALCR and RAMP1, RAMP2 or RAMP3; the receptor complexes function as AMYR1, AMYR2 and AMYR3 receptors, respectively, and respond to amylin/IAPP, calcitonin/CT and CGRP1 ligands. Interacts with GPRASP2.

Its subcellular location is the cell membrane. G protein-coupled receptor activated by ligand peptides amylin (IAPP), calcitonin (CT/CALCA) and calcitonin gene-related peptide type 1 (CGRP1/CALCA). CALCR interacts with receptor-activity-modifying proteins RAMP1, 2 and 3 to form receptor complexes AMYR1, 2 and 3, respectively. IAPP, CT and CGRP1 activate CALCR and AMYRs with distinct modes of receptor activation resulting in specific phenotypes. Ligand binding causes a conformation change that triggers signaling via guanine nucleotide-binding proteins (G proteins) and modulates the activity of downstream effectors. Activates cAMP-dependent pathway. The sequence is that of Calcitonin receptor from Sus scrofa (Pig).